We begin with the raw amino-acid sequence, 209 residues long: Uracil phosphoribosyltransferase (209 aa).

Residues Arg-79, Arg-104, and 131–139 (DPMLATGGS) contribute to the 5-phospho-alpha-D-ribose 1-diphosphate site. Uracil-binding positions include Ile-194 and 199 to 201 (GDA). Residue Asp-200 coordinates 5-phospho-alpha-D-ribose 1-diphosphate.

This sequence belongs to the UPRTase family. Mg(2+) is required as a cofactor.

The enzyme catalyses UMP + diphosphate = 5-phospho-alpha-D-ribose 1-diphosphate + uracil. It participates in pyrimidine metabolism; UMP biosynthesis via salvage pathway; UMP from uracil: step 1/1. Allosterically activated by GTP. Functionally, catalyzes the conversion of uracil and 5-phospho-alpha-D-ribose 1-diphosphate (PRPP) to UMP and diphosphate. The sequence is that of Uracil phosphoribosyltransferase from Streptococcus pneumoniae (strain ATCC BAA-255 / R6).